The sequence spans 183 residues: Peptide deformylase (183 aa).

C111 and H154 together coordinate Fe cation. E155 is a catalytic residue. Residue H158 coordinates Fe cation.

The protein belongs to the polypeptide deformylase family. Requires Fe(2+) as cofactor.

The enzyme catalyses N-terminal N-formyl-L-methionyl-[peptide] + H2O = N-terminal L-methionyl-[peptide] + formate. In terms of biological role, removes the formyl group from the N-terminal Met of newly synthesized proteins. Requires at least a dipeptide for an efficient rate of reaction. N-terminal L-methionine is a prerequisite for activity but the enzyme has broad specificity at other positions. The sequence is that of Peptide deformylase from Staphylococcus aureus (strain COL).